Here is a 381-residue protein sequence, read N- to C-terminus: Chorismate synthase (381 aa).

2 residues coordinate NADP(+): arginine 41 and arginine 47. FMN is bound by residues 127–129 (RAS), 247–248 (QA), glycine 291, 306–310 (KPIPT), and arginine 332.

Belongs to the chorismate synthase family. As to quaternary structure, homotetramer. It depends on FMNH2 as a cofactor.

The catalysed reaction is 5-O-(1-carboxyvinyl)-3-phosphoshikimate = chorismate + phosphate. Its pathway is metabolic intermediate biosynthesis; chorismate biosynthesis; chorismate from D-erythrose 4-phosphate and phosphoenolpyruvate: step 7/7. Catalyzes the anti-1,4-elimination of the C-3 phosphate and the C-6 proR hydrogen from 5-enolpyruvylshikimate-3-phosphate (EPSP) to yield chorismate, which is the branch point compound that serves as the starting substrate for the three terminal pathways of aromatic amino acid biosynthesis. This reaction introduces a second double bond into the aromatic ring system. This Anaeromyxobacter dehalogenans (strain 2CP-C) protein is Chorismate synthase.